The chain runs to 561 residues: Reductase FVEG_12641 (561 aa).

The disordered stretch occupies residues 1-26 (MGVQSTANLPKETVSHLDTAPTPKPG). Residues 52 to 189 (QQHDGPVFCS…ICKGDTISLL (138 aa)) form the MOSC domain. The FAD-binding FR-type domain occupies 237–342 (SAPKTYTLVD…PGSNPGAMEN (106 aa)). FMN contacts are provided by residues 288–289 (FE), 305–307 (GVS), 313–316 (RGGS), and T362. One can recognise a 2Fe-2S ferredoxin-type domain in the interval 474–561 (FEVEVDEPDS…GIGRLRIEID (88 aa)). A [2Fe-2S] cluster-binding site is contributed by C512. S514 lines the FMN pocket. C517, C520, and C548 together coordinate [2Fe-2S] cluster.

Belongs to the PDR/VanB family. In terms of assembly, monomer. It depends on FMN as a cofactor.

Functionally, reductase; part of the Fusarium detoxification of benzoxazolinone cluster 2 (FDB2) involved in the degradation of benzoxazolinones produced by the host plant. Maize, wheat, and rye produce the 2 benzoxazinone phytoanticipins 2,4-dihy-droxy-7-methoxy-1,4-benzoxazin-3-one (DIMBOA) and 2,4-dihydroxy-1,4-benzoxazin-3-one (DIBOA) that, due to their inherent instability once released, spontaneously degrade to the more stable corresponding benzoxazolinones, 6-methoxy-2-benzoxazolinone (MBOA) and 2-benzoxazolinone (BOA), respectively. The first step in the detoxification of benzoxazolinones involves the hydrolysis of the cyclic ester bond of benzoxazolinones by the FDB1 cluster gamma-lactamase MBL1 to aminophenols. MBL1 is able to convert BOA into 2-aminophenol (2-AP), as well as MBOA into 5-methoxy-2-aminophenol (2-AMP). The FDB2 cluster N-malonyltransferase FDB2/NAT1 then metabolizes aminophenols via N-malonylation to non-toxic malonamic acids. FDB2/NAT1 converts 2-AP into N-(2-hydroxyphenyl) malonamic acid (HPMA) and 2-AMP into N-(2-hydroxy-4-methoxyphenyl) malonamic acid (HMPMA). The duplicated dienlactone hydrolases DLH1 and DLH2 may provide redundant function for hydrolyzing the lactone moiety in the BOA molecule. The roles of the amidases an other enzymes encoded by the 2 FDB clusters have not been identified so far. The protein is Reductase FVEG_12641 of Gibberella moniliformis (strain M3125 / FGSC 7600) (Maize ear and stalk rot fungus).